Reading from the N-terminus, the 108-residue chain is Circadian clock oscillator protein KaiB (108 aa).

The protein belongs to the KaiB family. As to quaternary structure, homodimer, interacts with KaiC. The KaiABC complex composition changes during the circadian cycle to control KaiC phosphorylation. Complexes KaiC(6), KaiA(2-4):KaiC(6), KaiB(6):KaiC(6) and KaiC(6):KaiB(6):KaiA(12) are among the most important forms, many form cooperatively. Undergoes a major conformational rearrangment; in the free state forms homotetramers as a dimer of dimers. When bound to the CI domain of KaiC switches to a monomeric thioredoxin-fold (KaiB(fs)). KaiB(fs) binds CikA, leading it to dephosphorylate phospho-RpaA.

Key component of the KaiABC oscillator complex, which constitutes the main circadian regulator in cyanobacteria. Complex composition changes during the circadian cycle to control KaiC phosphorylation. KaiA stimulates KaiC autophosphorylation, while KaiB sequesters KaiA, leading to KaiC autodephosphorylation. Phospho-Ser-431 KaiC accumulation triggers binding of KaiB to form the KaiB(6):KaiC(6) complex, leading to changes in output regulators CikA and SasA. KaiB switches to a thioredoxin-like fold (KaiB(fs)) when bound to KaiC. KaiB(6):KaiC(6) formation exposes a site for KaiA binding that sequesters KaiA from KaiC, making the KaiC(6):KaiB(6):KaiA(12) complex that results in KaiC autodephosphorylation. Its function is as follows. A metamorphic protein which reversibly switches between an inactive tetrameric fold and a rare, thioredoxin-like monomeric fold (KaiB(fs)). KaiB(fs) binds phospho-KaiC, KaiA and CikA. KaiA and CikA compete for binding to KaiB(fs), and KaiB(fs) and SasA compete for binding to KaiC, thus the clock oscillator and output signal pathway are tightly coupled. The polypeptide is Circadian clock oscillator protein KaiB (Nostoc sp. (strain PCC 7120 / SAG 25.82 / UTEX 2576)).